The primary structure comprises 4574 residues: E3 ubiquitin-protein ligase MYCBP2 (4574 aa).

Disordered stretches follow at residues 92 to 115 (RGKK…VKTR) and 599 to 620 (SASK…PYKP). RCC1 repeat units lie at residues 591 to 646 (DGSV…IVTK), 690 to 746 (SGEV…MMCQ), 943 to 993 (NGDV…VLLM), and 995 to 1051 (GQVF…LRID). The span at 611–620 (SRRQPKPYKP) shows a compositional bias: basic residues. Cysteine 1733 and cysteine 1850 are disulfide-bonded. 2 disordered regions span residues 1976-1998 (APPT…EQGL) and 2313-2332 (LQRL…LTFG). Composition is skewed to polar residues over residues 1981–1998 (NPNQ…EQGL) and 2317–2328 (PGTSSNSATGTD). The Filamin repeat unit spans residues 2336–2417 (APKLEATYEP…IHVTIDGIEI (82 aa)). 5 disordered regions span residues 2613–2824 (GFDY…PSPH), 2845–2922 (SNDE…KQAM), 3085–3116 (SPGS…KAEV), 3345–3365 (PGSN…TDSD), and 3505–3526 (FETE…EQEK). 2 stretches are compositionally biased toward basic and acidic residues: residues 2639-2663 (HRQE…KSKN) and 2678-2688 (DTGKLRSDSHS). Residues 2716 to 2729 (NPGSRSSSPKQKTF) show a composition bias toward polar residues. Residues 2730–2745 (TSGRSSPSSTSSPRSS) show a composition bias toward low complexity. 3 stretches are compositionally biased toward basic and acidic residues: residues 2761–2772 (VHLDPPRERSKS), 2854–2864 (SELHNAEEGSS), and 2874–2883 (PVKEELESRS). Composition is skewed to basic residues over residues 2887 to 2900 (VSRK…RPKK) and 3102 to 3111 (KKTKKEKKKK). The segment covering 3515 to 3526 (NKGNKENLEQEK) has biased composition (basic and acidic residues). Residues 3617-3795 (FNISVQSGYE…SVAQQKNCEA (179 aa)) enclose the DOC domain. Residues 3815 to 3841 (GDAEPTPEQEEKNLLSSPEGEDKAPSD) are disordered. The Zn(2+) site is built by cysteine 4324, cysteine 4327, cysteine 4342, histidine 4344, histidine 4347, cysteine 4350, cysteine 4371, cysteine 4374, cysteine 4440, and cysteine 4443. The RING-type; atypical zinc finger occupies 4324–4375 (CMICFTEALSAAPAIQLDCSHVFHLQCTRRVLENRWLGPRITFGFMSCPICK). Residues 4435–4572 (YAYYVCFKCK…LGCGVCRNAH (138 aa)) form a tandem cysteine domain region. The active site involves cysteine 4454. Zn(2+) is bound by residues cysteine 4471, cysteine 4474, cysteine 4483, histidine 4486, cysteine 4495, cysteine 4498, and cysteine 4499. Residue cysteine 4506 is part of the active site. Zn(2+)-binding residues include cysteine 4513, cysteine 4516, cysteine 4534, cysteine 4548, histidine 4554, cysteine 4565, and cysteine 4568.

It belongs to the RING-Cys relay (RCR) family. In terms of tissue distribution, widely expressed when the visual system begins developing. In the eye, expressed in all cells, including retinal ganglion cells, with no obvious gradient.

The protein localises to the nucleus. It localises to the cell projection. It is found in the axon. Its subcellular location is the cytoplasm. The protein resides in the cytoskeleton. The catalysed reaction is [E2 ubiquitin-conjugating enzyme]-S-ubiquitinyl-L-cysteine + [acceptor protein]-L-threonine = [E2 ubiquitin-conjugating enzyme]-L-cysteine + [acceptor protein]-3-O-ubiquitinyl-L-threonine.. Its pathway is protein modification; protein ubiquitination. In terms of biological role, atypical E3 ubiquitin-protein ligase which specifically mediates ubiquitination of threonine and serine residues on target proteins, instead of ubiquitinating lysine residues. Shows esterification activity towards both threonine and serine, with a preference for threonine, and acts via two essential catalytic cysteine residues that relay ubiquitin to its substrate via thioester intermediates. Interacts with the E2 enzymes UBE2D1, UBE2D3, UBE2E1 and UBE2L3. Plays a key role in neural development, probably by mediating ubiquitination of threonine residues on target proteins. Involved in different processes such as regulation of neurite outgrowth, synaptic growth, synaptogenesis and axon degeneration. Required in the visual system for correct fasciculation, targeting and mapping of retinal axons. Acts as a regulator of pteridine synthesis. May play a role in the regulation of the circadian clock gene expression. This chain is E3 ubiquitin-protein ligase MYCBP2, found in Danio rerio (Zebrafish).